The primary structure comprises 217 residues: Octanoyltransferase (217 aa).

The BPL/LPL catalytic domain maps to 32–207 (SESHDELWIV…TFSQLLGYQH (176 aa)). Residues 71 to 78 (RGGQVTYH), 138 to 140 (SLG), and 151 to 153 (GLA) each bind substrate. Cys169 serves as the catalytic Acyl-thioester intermediate.

This sequence belongs to the LipB family.

The protein localises to the cytoplasm. It catalyses the reaction octanoyl-[ACP] + L-lysyl-[protein] = N(6)-octanoyl-L-lysyl-[protein] + holo-[ACP] + H(+). The protein operates within protein modification; protein lipoylation via endogenous pathway; protein N(6)-(lipoyl)lysine from octanoyl-[acyl-carrier-protein]: step 1/2. Functionally, catalyzes the transfer of endogenously produced octanoic acid from octanoyl-acyl-carrier-protein onto the lipoyl domains of lipoate-dependent enzymes. Lipoyl-ACP can also act as a substrate although octanoyl-ACP is likely to be the physiological substrate. In Shewanella baltica (strain OS155 / ATCC BAA-1091), this protein is Octanoyltransferase.